The chain runs to 296 residues: Fructose-bisphosphate aldolase class 1 (296 aa).

The Proton acceptor role is filled by glutamate 175. Lysine 212 (schiff-base intermediate with dihydroxyacetone-P) is an active-site residue.

It belongs to the class I fructose-bisphosphate aldolase family.

The catalysed reaction is beta-D-fructose 1,6-bisphosphate = D-glyceraldehyde 3-phosphate + dihydroxyacetone phosphate. The protein operates within carbohydrate degradation; glycolysis; D-glyceraldehyde 3-phosphate and glycerone phosphate from D-glucose: step 4/4. This Staphylococcus aureus (strain USA300) protein is Fructose-bisphosphate aldolase class 1.